The primary structure comprises 68 residues: Phycobilisome 7.8 kDa linker polypeptide, allophycocyanin-associated, core (68 aa).

The region spanning 2 to 57 (SRLFKITALVPSLSRTRTQRELQNTYFTKLVPYENWFREQQRIQKAGGKIIKVELA) is the CpcD-like domain.

It belongs to the phycobilisome linker protein family.

Its subcellular location is the cellular thylakoid membrane. In terms of biological role, rod linker protein, associated with allophycocyanin. Linker polypeptides determine the state of aggregation and the location of the disk-shaped phycobiliprotein units within the phycobilisome and modulate their spectroscopic properties in order to mediate a directed and optimal energy transfer. The protein is Phycobilisome 7.8 kDa linker polypeptide, allophycocyanin-associated, core (apcC) of Nostoc sp. (strain PCC 7120 / SAG 25.82 / UTEX 2576).